We begin with the raw amino-acid sequence, 449 residues long: UDP-N-acetylmuramate--L-alanine ligase (449 aa).

118–124 (GTHGKTT) provides a ligand contact to ATP.

The protein belongs to the MurCDEF family.

It is found in the cytoplasm. It catalyses the reaction UDP-N-acetyl-alpha-D-muramate + L-alanine + ATP = UDP-N-acetyl-alpha-D-muramoyl-L-alanine + ADP + phosphate + H(+). The protein operates within cell wall biogenesis; peptidoglycan biosynthesis. Functionally, cell wall formation. The sequence is that of UDP-N-acetylmuramate--L-alanine ligase from Flavobacterium johnsoniae (strain ATCC 17061 / DSM 2064 / JCM 8514 / BCRC 14874 / CCUG 350202 / NBRC 14942 / NCIMB 11054 / UW101) (Cytophaga johnsonae).